We begin with the raw amino-acid sequence, 434 residues long: 5-methylthioadenosine/S-adenosylhomocysteine deaminase (434 aa).

Residues histidine 66 and histidine 68 each contribute to the Zn(2+) site. 3 residues coordinate substrate: glutamate 95, arginine 148, and histidine 188. Residue histidine 215 participates in Zn(2+) binding. Substrate contacts are provided by glutamate 218 and aspartate 304. Aspartate 304 contacts Zn(2+).

The protein belongs to the metallo-dependent hydrolases superfamily. MTA/SAH deaminase family. Requires Zn(2+) as cofactor.

The enzyme catalyses S-adenosyl-L-homocysteine + H2O + H(+) = S-inosyl-L-homocysteine + NH4(+). It carries out the reaction S-methyl-5'-thioadenosine + H2O + H(+) = S-methyl-5'-thioinosine + NH4(+). Functionally, catalyzes the deamination of 5-methylthioadenosine and S-adenosyl-L-homocysteine into 5-methylthioinosine and S-inosyl-L-homocysteine, respectively. Is also able to deaminate adenosine. The sequence is that of 5-methylthioadenosine/S-adenosylhomocysteine deaminase from Shouchella clausii (strain KSM-K16) (Alkalihalobacillus clausii).